The primary structure comprises 223 residues: Endonuclease NucS (223 aa).

The protein belongs to the NucS endonuclease family.

Its subcellular location is the cytoplasm. Cleaves both 3' and 5' ssDNA extremities of branched DNA structures. This Streptomyces avermitilis (strain ATCC 31267 / DSM 46492 / JCM 5070 / NBRC 14893 / NCIMB 12804 / NRRL 8165 / MA-4680) protein is Endonuclease NucS.